We begin with the raw amino-acid sequence, 309 residues long: Malate dehydrogenase (309 aa).

NAD(+) contacts are provided by residues 8–13 (GAGLVG) and aspartate 33. Arginine 82 and arginine 88 together coordinate substrate. NAD(+) contacts are provided by residues asparagine 95 and 118-120 (VSN). Substrate-binding residues include asparagine 120 and arginine 151. Histidine 175 (proton acceptor) is an active-site residue.

This sequence belongs to the LDH/MDH superfamily. MDH type 3 family.

The enzyme catalyses (S)-malate + NAD(+) = oxaloacetate + NADH + H(+). Catalyzes the reversible oxidation of malate to oxaloacetate. This Pseudomonas putida (strain GB-1) protein is Malate dehydrogenase.